The sequence spans 1562 residues: Pikromycin polyketide synthase component PikAIII (1562 aa).

The Ketosynthase family 3 (KS3) domain occupies 34-464; it reads HEPVAIVGMA…GTNAHVVLEE (431 aa). The interval 37–1475 is module 5; it reads VAIVGMACRL…TPAALAAHLH (1439 aa). Residue cysteine 209 is the Acyl-thioester intermediate; for beta-ketoacyl synthase activity of the active site. Catalysis depends on for beta-ketoacyl synthase activity residues histidine 344 and histidine 384. An acyltransferase region spans residues 565–866; the sequence is FVFPGQGTQW…GGQERLVTSL (302 aa). The Acyl-ester intermediate; for acyltransferase activity role is filled by serine 655. The beta-ketoacyl reductase stretch occupies residues 1116 to 1293; it reads GTVLITGGTG…ATSVAWGLWA (178 aa). NADP(+) is bound by residues 1124 to 1127, 1147 to 1150, 1176 to 1177, lysine 1226, and 1248 to 1249; these read TGAL, SRSG, DV, and YS. The active-site Acyl-ester intermediate; for beta-ketoacyl reductase activity is the tyrosine 1263. Residues 1403–1478 enclose the Carrier domain; that stretch reads PALLTLVRTH…ALAAHLHEAY (76 aa). The residue at position 1438 (serine 1438) is an O-(pantetheine 4'-phosphoryl)serine. Residues 1519–1548 form a disordered region; the sequence is GIEPEPGSGGSDGGAADPGAEPEASIDDLD. Low complexity predominate over residues 1532–1541; sequence GAADPGAEPE.

Homodimer. Pikromycin PKS consists of a combination of multimodular (PikAI and PikAII) and monomodular (PikAIII and PikAIV) polypeptides each coding for a functional synthase subunit which participates in 1 (monomodular) or 2 (multimodular) of the six FAS-like elongation steps required for formation of the polyketide. Module 1, 2, 3, 4, 5, and 6 participating in biosynthesis steps 1, 2, 3, 4, 5, and 6, respectively. The cofactor is pantetheine 4'-phosphate.

It carries out the reaction 5 (S)-methylmalonyl-CoA + malonyl-CoA + 5 NADPH + 11 H(+) = 10-deoxymethynolide + 6 CO2 + 5 NADP(+) + 6 CoA + 2 H2O. The enzyme catalyses 6 (S)-methylmalonyl-CoA + malonyl-CoA + 5 NADPH + 12 H(+) = narbonolide + 7 CO2 + 5 NADP(+) + 7 CoA + 2 H2O. The protein operates within antibiotic biosynthesis. Its function is as follows. Involved in the biosynthesis of 12- and 14-membered ring macrolactone antibiotics such as methymycin and neomethymycin, and pikromycin and narbomycin, respectively. Component of the pikromycin PKS which catalyzes the biosynthesis of both precursors 10-deoxymethynolide (12-membered ring macrolactone) and narbonolide (14-membered ring macrolactone). Chain elongation through PikAI, PikAII and PikAIII followed by thioesterase catalyzed termination results in the production of 10-deoxymethynolide, while continued elongation through PikAIV, followed by thioesterase (TE) catalyzed cyclization results in the biosynthesis of the narbonolide. This is Pikromycin polyketide synthase component PikAIII from Streptomyces venezuelae.